Reading from the N-terminus, the 212-residue chain is Imidazole glycerol phosphate synthase subunit HisH (212 aa).

One can recognise a Glutamine amidotransferase type-1 domain in the interval 1-210; sequence MIAVINYGAG…VRWSEAVQPK (210 aa). Cysteine 79 acts as the Nucleophile in catalysis. Catalysis depends on residues histidine 185 and glutamate 187.

Heterodimer of HisH and HisF.

It is found in the cytoplasm. It catalyses the reaction 5-[(5-phospho-1-deoxy-D-ribulos-1-ylimino)methylamino]-1-(5-phospho-beta-D-ribosyl)imidazole-4-carboxamide + L-glutamine = D-erythro-1-(imidazol-4-yl)glycerol 3-phosphate + 5-amino-1-(5-phospho-beta-D-ribosyl)imidazole-4-carboxamide + L-glutamate + H(+). The enzyme catalyses L-glutamine + H2O = L-glutamate + NH4(+). It participates in amino-acid biosynthesis; L-histidine biosynthesis; L-histidine from 5-phospho-alpha-D-ribose 1-diphosphate: step 5/9. Its function is as follows. IGPS catalyzes the conversion of PRFAR and glutamine to IGP, AICAR and glutamate. The HisH subunit catalyzes the hydrolysis of glutamine to glutamate and ammonia as part of the synthesis of IGP and AICAR. The resulting ammonia molecule is channeled to the active site of HisF. This Chloroflexus aurantiacus (strain ATCC 29364 / DSM 637 / Y-400-fl) protein is Imidazole glycerol phosphate synthase subunit HisH.